The sequence spans 27 residues: Zinc metalloproteinase multactivase catalytic subunit (27 aa).

In terms of domain architecture, Peptidase M12B spans phenylalanine 12 to lysine 27. A Ca(2+)-binding site is contributed by glutamate 14.

This sequence belongs to the venom metalloproteinase (M12B) family. P-III subfamily. P-IIId sub-subfamily. Heterodimer of a metalloproteinase subunit and a regulatory subunit comprising two homologous disulfide-linked lectins (AC P81798). Requires Zn(2+) as cofactor. As to expression, expressed by the venom gland.

It is found in the secreted. In terms of biological role, this carinactivase-like calcium-dependent prothrombin (F2) activator activates prothrombin via recognition of the calcium ion bound conformation of its gamma-carboxyglutamic acid (GLA) domain, and the subsequent conversion of prothrombin to active thrombin is catalyzed by the catalytic subunit. The polypeptide is Zinc metalloproteinase multactivase catalytic subunit (Echis multisquamatus (Central Asian sand viper)).